Here is a 997-residue protein sequence, read N- to C-terminus: Disease resistance protein RML1A (997 aa).

Residues 12 to 176 (WRYRVFTSFH…KIARDVSEKL (165 aa)) enclose the TIR domain. Residue E87 is part of the active site. Positions 191-447 (EAHLRKIQSL…HIAIFFNYED (257 aa)) constitute an NB-ARC domain. LRR repeat units lie at residues 194–218 (LRKI…GPAG), 534–557 (TSGI…RFLS), 600–623 (AENL…TQLL), 624–647 (TKLK…SNAT), 649–670 (LEML…IKNL), 671–693 (HKLD…NINL), 694–714 (ASLE…PAFS), 715–737 (TKIK…ITHC), 758–781 (PSSL…CIKD), and 783–808 (QRLD…SLRL).

The enzyme catalyses NAD(+) + H2O = ADP-D-ribose + nicotinamide + H(+). Functionally, TIR-NB-LRR receptor-like protein that confers resistance to the pathogen Leptosphaeria maculans (blackleg disease). In Arabidopsis thaliana (Mouse-ear cress), this protein is Disease resistance protein RML1A.